A 443-amino-acid polypeptide reads, in one-letter code: Thymidine phosphorylase (443 aa).

Belongs to the thymidine/pyrimidine-nucleoside phosphorylase family. Homodimer.

It catalyses the reaction thymidine + phosphate = 2-deoxy-alpha-D-ribose 1-phosphate + thymine. It functions in the pathway pyrimidine metabolism; dTMP biosynthesis via salvage pathway; dTMP from thymine: step 1/2. The enzymes which catalyze the reversible phosphorolysis of pyrimidine nucleosides are involved in the degradation of these compounds and in their utilization as carbon and energy sources, or in the rescue of pyrimidine bases for nucleotide synthesis. This Shewanella amazonensis (strain ATCC BAA-1098 / SB2B) protein is Thymidine phosphorylase.